A 1088-amino-acid chain; its full sequence is RNA-directed RNA polymerase (1088 aa).

The RdRp catalytic domain occupies 501-687 (LSYGDVTRFL…AKRYIAGGKI (187 aa)).

The protein belongs to the reoviridae RNA-directed RNA polymerase family. In terms of assembly, interacts with VP3 (Potential). Interacts with VP2; this interaction activates VP1. Interacts with NSP5; this interaction is probably necessary for the formation of functional virus factories. Interacts with NSP2; this interaction is weak. The cofactor is Mg(2+).

The protein localises to the virion. The enzyme catalyses RNA(n) + a ribonucleoside 5'-triphosphate = RNA(n+1) + diphosphate. Functionally, RNA-directed RNA polymerase that is involved in both transcription and genome replication. Together with VP3 capping enzyme, forms an enzyme complex positioned near the channels situated at each of the five-fold vertices of the core. Following infection, the outermost layer of the virus is lost, leaving a double-layered particle (DLP) made up of the core and VP6 shell. VP1 then catalyzes the transcription of fully conservative plus-strand genomic RNAs that are extruded through the DLP's channels into the cytoplasm where they function as mRNAs for translation of viral proteins. One copy of each of the viral (+)RNAs is also recruited during core assembly, together with newly synthesized polymerase complexes and VP2. The polymerase of these novo-formed particles catalyzes the synthesis of complementary minus-strands leading to dsRNA formation. To do so, the polymerase specifically recognizes and binds 4 bases 5'-UGUG-3' in the conserved 3'-sequence of plus-strand RNA templates. VP2 presumably activates the autoinhibited VP1-RNA complex to coordinate packaging and genome replication. Once dsRNA synthesis is complete, the polymerase switches to the transcriptional mode, thus providing secondary transcription. The chain is RNA-directed RNA polymerase from Rotavirus A (strain RVA/Human/Philippines/L26/1987/G12P1B[4]) (RV-A).